Here is a 377-residue protein sequence, read N- to C-terminus: Anhydro-N-acetylmuramic acid kinase (377 aa).

12 to 19 (GTSLDGID) provides a ligand contact to ATP.

Belongs to the anhydro-N-acetylmuramic acid kinase family.

The catalysed reaction is 1,6-anhydro-N-acetyl-beta-muramate + ATP + H2O = N-acetyl-D-muramate 6-phosphate + ADP + H(+). Its pathway is amino-sugar metabolism; 1,6-anhydro-N-acetylmuramate degradation. It functions in the pathway cell wall biogenesis; peptidoglycan recycling. Its function is as follows. Catalyzes the specific phosphorylation of 1,6-anhydro-N-acetylmuramic acid (anhMurNAc) with the simultaneous cleavage of the 1,6-anhydro ring, generating MurNAc-6-P. Is required for the utilization of anhMurNAc either imported from the medium or derived from its own cell wall murein, and thus plays a role in cell wall recycling. The sequence is that of Anhydro-N-acetylmuramic acid kinase from Methylorubrum populi (strain ATCC BAA-705 / NCIMB 13946 / BJ001) (Methylobacterium populi).